Consider the following 211-residue polypeptide: Thymidylate kinase (211 aa).

Residue 11–18 (GPDGAGKT) coordinates ATP.

Belongs to the thymidylate kinase family.

The enzyme catalyses dTMP + ATP = dTDP + ADP. Phosphorylation of dTMP to form dTDP in both de novo and salvage pathways of dTTP synthesis. The sequence is that of Thymidylate kinase from Streptococcus equi subsp. zooepidemicus (strain H70).